Consider the following 320-residue polypeptide: Transaldolase (320 aa).

Lysine 126 serves as the catalytic Schiff-base intermediate with substrate.

Belongs to the transaldolase family. Type 1 subfamily. Homodimer.

Its subcellular location is the cytoplasm. It catalyses the reaction D-sedoheptulose 7-phosphate + D-glyceraldehyde 3-phosphate = D-erythrose 4-phosphate + beta-D-fructose 6-phosphate. The protein operates within carbohydrate degradation; pentose phosphate pathway; D-glyceraldehyde 3-phosphate and beta-D-fructose 6-phosphate from D-ribose 5-phosphate and D-xylulose 5-phosphate (non-oxidative stage): step 2/3. In terms of biological role, transaldolase is important for the balance of metabolites in the pentose-phosphate pathway. This chain is Transaldolase, found in Bordetella pertussis (strain Tohama I / ATCC BAA-589 / NCTC 13251).